The primary structure comprises 252 residues: 5-oxoprolinase subunit A (252 aa).

Belongs to the LamB/PxpA family. In terms of assembly, forms a complex composed of PxpA, PxpB and PxpC.

The catalysed reaction is 5-oxo-L-proline + ATP + 2 H2O = L-glutamate + ADP + phosphate + H(+). Catalyzes the cleavage of 5-oxoproline to form L-glutamate coupled to the hydrolysis of ATP to ADP and inorganic phosphate. In Kocuria rhizophila (strain ATCC 9341 / DSM 348 / NBRC 103217 / DC2201), this protein is 5-oxoprolinase subunit A.